A 77-amino-acid chain; its full sequence is Mitochondrial import inner membrane translocase subunit TIM8 (77 aa).

Met-1 is modified (N-acetylmethionine). The Twin CX3C motif signature appears at 35–59 (CWDKCITSAPGSKFSSSESSCLTHC). Intrachain disulfides connect Cys-35–Cys-59 and Cys-39–Cys-55.

This sequence belongs to the small Tim family. Heterohexamer; composed of 3 copies of TIM8 and 3 copies of TIM13, named soluble 70 kDa complex. Associates with the TIM22 complex, whose core is composed of TIM22. In terms of tissue distribution, expressed in roots, flowers, young cotyledons and leaves.

It is found in the mitochondrion intermembrane space. Mitochondrial intermembrane chaperone that participates in the import and insertion of some multi-pass transmembrane proteins into the mitochondrial inner membrane. Also required for the transfer of beta-barrel precursors from the TOM complex to the sorting and assembly machinery (SAM complex) of the outer membrane. Acts as a chaperone-like protein that protects the hydrophobic precursors from aggregation and guide them through the mitochondrial intermembrane space. The TIM8-TIM13 complex mediates the import of some proteins while the predominant TIM9-TIM10 70 kDa complex mediates the import of much more proteins. This chain is Mitochondrial import inner membrane translocase subunit TIM8 (TIM8), found in Arabidopsis thaliana (Mouse-ear cress).